Reading from the N-terminus, the 315-residue chain is MKPIKIALIGAGNVGNSFLYAAMNQGLASEYGIIDINPDFADGNAFDFEDASASLPFPISVSRYEYKDLKDADFIVITAGRPQKPGETRLELVADNIRIIREIALKVKESGFSGISIIVANPVDIITRAYRDASGFSDQKVIGSGTVLDTARLQFAIAKRAKVSPNSVQAYVMGEHGDSSFVAYSNIKIAGECFCAYSKLTGIDSSNYEKELEYPVSRRAYEIINRKRATFYGIGAAIAKIVSNIIKDTKNIMIAGANLRGEYGFHGVNIGVPVVLGANGIEKIIEISLNDKEKEKFAKSVAIIDKIYQDAIKNI.

3 residues coordinate NAD(+): Val-14, Asp-35, and Tyr-66. Substrate contacts are provided by residues Gln-83, Arg-89, and 121–124 (NPVD). Residues 119–121 (VAN) and Ser-144 contribute to the NAD(+) site. 149 to 152 (DTAR) serves as a coordination point for substrate. His-176 serves as the catalytic Proton acceptor. At Tyr-221 the chain carries Phosphotyrosine. Substrate is bound at residue Thr-230.

This sequence belongs to the LDH/MDH superfamily. LDH family. Homotetramer.

It is found in the cytoplasm. The catalysed reaction is (S)-lactate + NAD(+) = pyruvate + NADH + H(+). It participates in fermentation; pyruvate fermentation to lactate; (S)-lactate from pyruvate: step 1/1. Its function is as follows. Catalyzes the conversion of lactate to pyruvate. The polypeptide is L-lactate dehydrogenase (Mesomycoplasma hyopneumoniae (strain 7448) (Mycoplasma hyopneumoniae)).